A 356-amino-acid polypeptide reads, in one-letter code: tRNA N6-adenosine threonylcarbamoyltransferase (356 aa).

H115 and H119 together coordinate Fe cation. Residues 137 to 141 (LVSGG), D170, G183, and N280 contribute to the substrate site. D308 provides a ligand contact to Fe cation.

Belongs to the KAE1 / TsaD family. Requires Fe(2+) as cofactor.

It is found in the cytoplasm. It carries out the reaction L-threonylcarbamoyladenylate + adenosine(37) in tRNA = N(6)-L-threonylcarbamoyladenosine(37) in tRNA + AMP + H(+). Functionally, required for the formation of a threonylcarbamoyl group on adenosine at position 37 (t(6)A37) in tRNAs that read codons beginning with adenine. Is involved in the transfer of the threonylcarbamoyl moiety of threonylcarbamoyl-AMP (TC-AMP) to the N6 group of A37, together with TsaE and TsaB. TsaD likely plays a direct catalytic role in this reaction. This is tRNA N6-adenosine threonylcarbamoyltransferase from Paracoccus denitrificans (strain Pd 1222).